The following is a 159-amino-acid chain: Ribosomal RNA large subunit methyltransferase H (159 aa).

S-adenosyl-L-methionine-binding positions include leucine 76, glycine 108, and 127–132 (FSKMTF).

This sequence belongs to the RNA methyltransferase RlmH family. Homodimer.

Its subcellular location is the cytoplasm. The enzyme catalyses pseudouridine(1915) in 23S rRNA + S-adenosyl-L-methionine = N(3)-methylpseudouridine(1915) in 23S rRNA + S-adenosyl-L-homocysteine + H(+). Specifically methylates the pseudouridine at position 1915 (m3Psi1915) in 23S rRNA. In Clostridium botulinum (strain Okra / Type B1), this protein is Ribosomal RNA large subunit methyltransferase H.